A 425-amino-acid chain; its full sequence is Monoacylglycerol lipase ABHD2 (425 aa).

At 1 to 9 (MNAMMETSE) the chain is on the cytoplasmic side. The helical; Signal-anchor for type II membrane protein transmembrane segment at 10–30 (LPAVFDGVKLAAVAAVLYVIV) threads the bilayer. Over 31–425 (RCLNLKSPTA…DTELVEADLE (395 aa)) the chain is Extracellular. One can recognise an AB hydrolase-1 domain in the interval 128-382 (MVICPGIANH…HGGHLGFFEG (255 aa)). An N-linked (GlcNAc...) asparagine glycan is attached at asparagine 136. Serine 207 functions as the Nucleophile in the catalytic mechanism. Catalysis depends on charge relay system residues aspartate 345 and histidine 376. N-linked (GlcNAc...) asparagine glycosylation is present at asparagine 410.

This sequence belongs to the AB hydrolase superfamily. AB hydrolase 4 family.

It is found in the cell membrane. The enzyme catalyses Hydrolyzes glycerol monoesters of long-chain fatty acids.. It carries out the reaction an acetyl ester + H2O = an aliphatic alcohol + acetate + H(+). It catalyses the reaction a triacylglycerol + H2O = a diacylglycerol + a fatty acid + H(+). The catalysed reaction is 2-(5Z,8Z,11Z,14Z-eicosatetraenoyl)-glycerol + H2O = glycerol + (5Z,8Z,11Z,14Z)-eicosatetraenoate + H(+). The enzyme catalyses a butanoate ester + H2O = an aliphatic alcohol + butanoate + H(+). It carries out the reaction hexadecanoate ester + H2O = an aliphatic alcohol + hexadecanoate + H(+). Acylglycerol lipase activity is activated upon binding to progesterone. In terms of biological role, progesterone-dependent acylglycerol lipase that catalyzes hydrolysis of endocannabinoid arachidonoylglycerol (AG) from cell membrane. Acts as a progesterone receptor: progesterone-binding activates the acylglycerol lipase activity, mediating degradation of 1-arachidonoylglycerol (1AG) and 2-arachidonoylglycerol (2AG) to glycerol and arachidonic acid (AA). Also displays an ester hydrolase activity against acetyl ester, butanoate ester and hexadecanoate ester. Plays a key role in sperm capacitation in response to progesterone by mediating degradation of 2AG, an inhibitor of the sperm calcium channel CatSper, leading to calcium influx via CatSper and sperm activation. May also play a role in smooth muscle cells migration. The chain is Monoacylglycerol lipase ABHD2 (ABHD2) from Bos taurus (Bovine).